The following is a 330-amino-acid chain: Clp protease adapter protein ClpF, chloroplastic (330 aa).

A chloroplast-targeting transit peptide spans 1–65; it reads MVQSQSLSTL…KSLKQRNLLR (65 aa). Residues 66–138 form an NTD, required for CLPS1-binding region; that stretch reads VEARWPFQGG…VEEESIRLQE (73 aa). Coiled-coil stretches lie at residues 112-139 and 175-195; these read NLEQ…LQEG and AAKL…VSAK. The UVR domain maps to 153–188; sequence GISIIRLRADLQNAIDSEDYGLAAKLRDEISKLEAE. The yccV-like stretch occupies residues 203-310; sequence EYAFRLGQKL…TAGDFIPVKQ (108 aa).

Binds to CLPC1 and CLPC2. Interacts with ClpS1; this interaction stimulates their association with ClpC. Associates with the Clp substrate HEMA1 (GluTR). In terms of tissue distribution, expressed constitutively in photosynthetic tissues such as leaves, stems and flowers, and, at low levels, in siliques.

The protein resides in the plastid. It localises to the chloroplast. Functionally, clp protease adapter that facilitates CLPS1 recruitment to ClpC chaperones thus forming a binary adapter for selective substrate recognition and delivery to plastid Clp protease system (CLPC). In Arabidopsis thaliana (Mouse-ear cress), this protein is Clp protease adapter protein ClpF, chloroplastic.